A 278-amino-acid chain; its full sequence is Digeranylgeranylglyceryl phosphate synthase (278 aa).

Helical transmembrane passes span 12-32 (LKNC…ASYF), 34-54 (LAMV…CGFG), 92-112 (LVVM…MAVL), 129-149 (IIGN…GGIA), 153-173 (IDVT…REII), 204-224 (FLLI…FFGI), 226-246 (YMIS…KLVF), and 257-277 (SRNI…GSLF).

Belongs to the UbiA prenyltransferase family. DGGGP synthase subfamily. The cofactor is Mg(2+).

The protein resides in the cell membrane. The catalysed reaction is sn-3-O-(geranylgeranyl)glycerol 1-phosphate + (2E,6E,10E)-geranylgeranyl diphosphate = 2,3-bis-O-(geranylgeranyl)-sn-glycerol 1-phosphate + diphosphate. The protein operates within membrane lipid metabolism; glycerophospholipid metabolism. Functionally, prenyltransferase that catalyzes the transfer of the geranylgeranyl moiety of geranylgeranyl diphosphate (GGPP) to the C2 hydroxyl of (S)-3-O-geranylgeranylglyceryl phosphate (GGGP). This reaction is the second ether-bond-formation step in the biosynthesis of archaeal membrane lipids. This Methanococcus maripaludis (strain DSM 14266 / JCM 13030 / NBRC 101832 / S2 / LL) protein is Digeranylgeranylglyceryl phosphate synthase.